A 176-amino-acid chain; its full sequence is MSKNNDTTLLNEEIRFPEVRCLGDEGTQYGVVSSSEALKIAQDLGLDLVLIAPEAKPPVCKIMDYGKFRYQQEKKQKEAKKKQKQIEIKEIKLSVKIAQNDVNYKVKHAKEFLEEDKHVRFRVFLKGREMSEPQSGVEVLKRVWELVEDIAIMDKEPKPEGRYVNMTVIPKPKKVK.

Belongs to the IF-3 family. In terms of assembly, monomer.

Its subcellular location is the cytoplasm. Its function is as follows. IF-3 binds to the 30S ribosomal subunit and shifts the equilibrium between 70S ribosomes and their 50S and 30S subunits in favor of the free subunits, thus enhancing the availability of 30S subunits on which protein synthesis initiation begins. This chain is Translation initiation factor IF-3, found in Wolinella succinogenes (strain ATCC 29543 / DSM 1740 / CCUG 13145 / JCM 31913 / LMG 7466 / NCTC 11488 / FDC 602W) (Vibrio succinogenes).